Here is a 459-residue protein sequence, read N- to C-terminus: tRNA modification GTPase MnmE (459 aa).

(6S)-5-formyl-5,6,7,8-tetrahydrofolate-binding residues include Arg-22, Glu-85, and Arg-124. In terms of domain architecture, TrmE-type G spans 221–380 (GLSTVIVGKP…LEIQIRDLFF (160 aa)). K(+) is bound at residue Asn-231. GTP contacts are provided by residues 231 to 236 (NVGKSS), 250 to 256 (TEVAGTT), and 275 to 278 (DTAG). Ser-235 lines the Mg(2+) pocket. Residues Thr-250, Val-252, and Thr-255 each coordinate K(+). Thr-256 lines the Mg(2+) pocket. Lys-459 contacts (6S)-5-formyl-5,6,7,8-tetrahydrofolate.

It belongs to the TRAFAC class TrmE-Era-EngA-EngB-Septin-like GTPase superfamily. TrmE GTPase family. In terms of assembly, homodimer. Heterotetramer of two MnmE and two MnmG subunits. It depends on K(+) as a cofactor.

Its subcellular location is the cytoplasm. In terms of biological role, exhibits a very high intrinsic GTPase hydrolysis rate. Involved in the addition of a carboxymethylaminomethyl (cmnm) group at the wobble position (U34) of certain tRNAs, forming tRNA-cmnm(5)s(2)U34. The protein is tRNA modification GTPase MnmE of Staphylococcus aureus (strain MW2).